The chain runs to 208 residues: Probable nicotinate-nucleotide adenylyltransferase (208 aa).

The protein belongs to the NadD family.

The catalysed reaction is nicotinate beta-D-ribonucleotide + ATP + H(+) = deamido-NAD(+) + diphosphate. The protein operates within cofactor biosynthesis; NAD(+) biosynthesis; deamido-NAD(+) from nicotinate D-ribonucleotide: step 1/1. Functionally, catalyzes the reversible adenylation of nicotinate mononucleotide (NaMN) to nicotinic acid adenine dinucleotide (NaAD). The protein is Probable nicotinate-nucleotide adenylyltransferase of Nostoc sp. (strain PCC 7120 / SAG 25.82 / UTEX 2576).